The chain runs to 299 residues: Mimecan (299 aa).

An N-terminal signal peptide occupies residues 1–19 (MKTLQSTLLLFLFVPLIKP). N-linked (GlcNAc...) (keratan sulfate) asparagine glycosylation is present at Asn-89. LRR repeat units lie at residues 113-132 (DAVPPLPKESAYLYARFNKI), 133-156 (KKLTAKDFADIPNLRRLDFTGNLI), 157-180 (EDIEDGTFSKLSLLEELTLAENQL), 181-200 (LKLPVLPPKLTLFNAKYNKI), 201-226 (KSRGIKANTFKKLHNLSFLYLDHNAL), 227-247 (ESVPLNLPESLRVIHLQFNNI), and 248-278 (TSITDDTFCKANDTSYIRDRIEEIRLEGNPV). A glycan (N-linked (GlcNAc...) (keratan sulfate) asparagine) is linked at Asn-215. Asn-246 carries N-linked (GlcNAc...) asparagine glycosylation. A disulfide bridge connects residues Cys-256 and Cys-289. N-linked (GlcNAc...) (keratan sulfate) asparagine glycosylation occurs at Asn-259.

This sequence belongs to the small leucine-rich proteoglycan (SLRP) family. SLRP class III subfamily. In terms of processing, contains keratan sulfate. Keratan sulfate attachment is observed in the cornea but the protein also exists in other tissues without keratan sulfate. The 12 kDa OIF in bone and the 25 kDa KSPG25 protein in cornea are probably proteolytic fragments. Bone and cornea.

The protein resides in the secreted. Its subcellular location is the extracellular space. The protein localises to the extracellular matrix. Its function is as follows. Induces bone formation in conjunction with TGF-beta-1 or TGF-beta-2. This Bos taurus (Bovine) protein is Mimecan (OGN).